The chain runs to 122 residues: Large ribosomal subunit protein bL12 (122 aa).

Belongs to the bacterial ribosomal protein bL12 family. In terms of assembly, homodimer. Part of the ribosomal stalk of the 50S ribosomal subunit. Forms a multimeric L10(L12)X complex, where L10 forms an elongated spine to which 2 to 4 L12 dimers bind in a sequential fashion. Binds GTP-bound translation factors.

In terms of biological role, forms part of the ribosomal stalk which helps the ribosome interact with GTP-bound translation factors. Is thus essential for accurate translation. This is Large ribosomal subunit protein bL12 from Mycoplasma genitalium (strain ATCC 33530 / DSM 19775 / NCTC 10195 / G37) (Mycoplasmoides genitalium).